Reading from the N-terminus, the 159-residue chain is Urease accessory protein UreE (159 aa).

The protein belongs to the UreE family.

The protein localises to the cytoplasm. Its function is as follows. Involved in urease metallocenter assembly. Binds nickel. Probably functions as a nickel donor during metallocenter assembly. This chain is Urease accessory protein UreE, found in Pseudomonas entomophila (strain L48).